A 474-amino-acid polypeptide reads, in one-letter code: Bifunctional protein HldE (474 aa).

Residues 1–321 (MILSSSLRPT…EYLHSSHQGE (321 aa)) form a ribokinase region. Residue 198-201 (NKKE) participates in ATP binding. The active site involves aspartate 266. The interval 348 to 474 (FTNGCFDILH…SAVVKKIQGS (127 aa)) is cytidylyltransferase.

The protein in the N-terminal section; belongs to the carbohydrate kinase PfkB family. In the C-terminal section; belongs to the cytidylyltransferase family. Homodimer.

It catalyses the reaction D-glycero-beta-D-manno-heptose 7-phosphate + ATP = D-glycero-beta-D-manno-heptose 1,7-bisphosphate + ADP + H(+). The catalysed reaction is D-glycero-beta-D-manno-heptose 1-phosphate + ATP + H(+) = ADP-D-glycero-beta-D-manno-heptose + diphosphate. The protein operates within nucleotide-sugar biosynthesis; ADP-L-glycero-beta-D-manno-heptose biosynthesis; ADP-L-glycero-beta-D-manno-heptose from D-glycero-beta-D-manno-heptose 7-phosphate: step 1/4. It functions in the pathway nucleotide-sugar biosynthesis; ADP-L-glycero-beta-D-manno-heptose biosynthesis; ADP-L-glycero-beta-D-manno-heptose from D-glycero-beta-D-manno-heptose 7-phosphate: step 3/4. Its function is as follows. Catalyzes the phosphorylation of D-glycero-D-manno-heptose 7-phosphate at the C-1 position to selectively form D-glycero-beta-D-manno-heptose-1,7-bisphosphate. Functionally, catalyzes the ADP transfer from ATP to D-glycero-beta-D-manno-heptose 1-phosphate, yielding ADP-D-glycero-beta-D-manno-heptose. This chain is Bifunctional protein HldE, found in Wolinella succinogenes (strain ATCC 29543 / DSM 1740 / CCUG 13145 / JCM 31913 / LMG 7466 / NCTC 11488 / FDC 602W) (Vibrio succinogenes).